Consider the following 164-residue polypeptide: Small ribosomal subunit protein uS9 (164 aa).

This sequence belongs to the universal ribosomal protein uS9 family.

In Rickettsia bellii (strain OSU 85-389), this protein is Small ribosomal subunit protein uS9.